The following is a 578-amino-acid chain: Proline--tRNA ligase (578 aa).

The protein belongs to the class-II aminoacyl-tRNA synthetase family. ProS type 1 subfamily. Homodimer.

It localises to the cytoplasm. It carries out the reaction tRNA(Pro) + L-proline + ATP = L-prolyl-tRNA(Pro) + AMP + diphosphate. In terms of biological role, catalyzes the attachment of proline to tRNA(Pro) in a two-step reaction: proline is first activated by ATP to form Pro-AMP and then transferred to the acceptor end of tRNA(Pro). As ProRS can inadvertently accommodate and process non-cognate amino acids such as alanine and cysteine, to avoid such errors it has two additional distinct editing activities against alanine. One activity is designated as 'pretransfer' editing and involves the tRNA(Pro)-independent hydrolysis of activated Ala-AMP. The other activity is designated 'posttransfer' editing and involves deacylation of mischarged Ala-tRNA(Pro). The misacylated Cys-tRNA(Pro) is not edited by ProRS. This Burkholderia pseudomallei (strain 668) protein is Proline--tRNA ligase.